The primary structure comprises 709 residues: Caprin-1 (709 aa).

Low complexity-rich tracts occupy residues 1 to 15 and 22 to 43; these read MPSA…SKSS and GSSG…QHPA. The interval 1–50 is disordered; that stretch reads MPSATSHSGSGSKSSGPPPPSGSSGSEAAAGAGAAAPASQHPATGTGAVQ. Proline 2 is subject to N-acetylproline. Position 2 is an N-acetylalanine (proline 2). Serine 10 is subject to Phosphoserine. A coiled-coil region spans residues 60–94; the sequence is VIDKKLRNLEKKKGKLDDYQERMNKGERLNQDQLD. The residue at position 115 (serine 115) is a Phosphoserine. Positions 125 to 153 form a coiled coil; sequence KTIKKTARREQLMREEAEQKRLKTVLELQ. Arginine 165 carries the omega-N-methylarginine modification. Positions 260-291 are disordered; it reads EEAASAPAVEDQVPEAEPEPAEEYTEQSEVES. Acidic residues predominate over residues 271 to 291; it reads QVPEAEPEPAEEYTEQSEVES. Serine 335 and serine 343 each carry phosphoserine. The tract at residues 360–381 is G3BP1-binding; sequence QDLMAQMQGPYNFIQDSMLDFE. 3 disordered regions span residues 417-446, 475-499, and 524-709; these read LAQP…TASQ, TDQT…GTSK, and APVP…QQVN. The segment covering 433 to 446 has biased composition (polar residues); sequence PLVSSTSEGYTASQ. Composition is skewed to low complexity over residues 477 to 491 and 537 to 570; these read QTTA…SQPQ and QQNQ…QTVV. The span at 577-605 shows a compositional bias: polar residues; the sequence is PDQSHQVTGNHQQPPQQNTGFPRSNQPYY. A Phosphotyrosine; by EPHA4 modification is found at tyrosine 625. An omega-N-methylarginine mark is found at arginine 626 and arginine 633. Phosphotyrosine; by EPHA4 is present on residues tyrosine 636 and tyrosine 639. Arginine 640 bears the Omega-N-methylarginine mark. Positions 642-657 are enriched in polar residues; sequence SFSNTPNSGYTQSQFS. O-linked (GlcNAc) serine glycans are attached at residues serine 644 and serine 649. 4 positions are modified to phosphotyrosine; by EPHA4: tyrosine 651, tyrosine 662, tyrosine 665, and tyrosine 670. 2 stretches are compositionally biased toward low complexity: residues 676–686 and 697–709; these read RGSGQSGPRGA and NRGM…QQVN. At arginine 698 the chain carries Asymmetric dimethylarginine; alternate. The residue at position 698 (arginine 698) is an Omega-N-methylarginine; alternate.

It belongs to the caprin family. May form homomultimers. Interacts with G3BP1; interaction is direct and promotes stress granule formation. Interacts with G3BP2; interaction is direct and promotes stress granule formation. Interacts with PQBP1. Interacts with DDX3X. Interacts (when phosphorylated by EPHA4) with FMR1; interaction with FMR1 promotes formation of a membraneless compartment. As to quaternary structure, (Microbial infection) Interacts with Zika virus capsid protein C; this interaction is probably linked to the inhibition of stress granules formation by the virus. In terms of assembly, (Microbial infection) Interacts with rotavirus A non-structural protein 5; this interaction probably plays a role in the sequestration of CAPRIN1 in viral factories. (Microbial infection) Interacts with Japanese encephalitis virus capsid protein C; this interaction is involved in the suppression of the integrated stress response by the virus. Tyrosine phosphorylation by EPHA4 promotes interaction with FMR1 and liquid-liquid phase separation (LLPS) for the formation of a membraneless compartment that concentrates mRNAs with associated regulatory factors. Post-translationally, O-glycosylated (O-GlcNAcylated), in a cell cycle-dependent manner. O-glycosylation by OGT inhibit ability to undergo liquid-liquid phase separation (LLPS). In terms of tissue distribution, ubiquitous.

It localises to the cytoplasm. Its subcellular location is the cytoplasmic ribonucleoprotein granule. The protein resides in the cytosol. It is found in the cell projection. The protein localises to the dendrite. It localises to the lamellipodium. Ability to mediate liquid-liquid phase separation is regulated by ATP: moderate concentrations of ATP enhance phase separation, whereas high concentrations of ATP lead to inhibition of phase separation. Functionally, mRNA-binding protein that acts as a regulator of mRNAs transport, translation and/or stability, and which is involved in neurogenesis, synaptic plasticity in neurons and cell proliferation and migration in multiple cell types. Plays an essential role in cytoplasmic stress granule formation. Acts as an mRNA regulator by mediating formation of some phase-separated membraneless compartment: undergoes liquid-liquid phase separation upon binding to target mRNAs, leading to assemble mRNAs into cytoplasmic ribonucleoprotein granules that concentrate mRNAs with associated regulatory factors. Undergoes liquid-liquid phase separation following phosphorylation and interaction with FMR1, promoting formation of cytoplasmic ribonucleoprotein granules that concentrate mRNAs with factors that inhibit translation and mediate deadenylation of target mRNAs. In these cytoplasmic ribonucleoprotein granules, CAPRIN1 mediates recruitment of CNOT7 deadenylase, leading to mRNA deadenylation and degradation. Binds directly and selectively to MYC and CCND2 mRNAs. In neuronal cells, directly binds to several mRNAs associated with RNA granules, including BDNF, CAMK2A, CREB1, MAP2, NTRK2 mRNAs, as well as to GRIN1 and KPNB1 mRNAs, but not to rRNAs. The sequence is that of Caprin-1 from Homo sapiens (Human).